Consider the following 339-residue polypeptide: Small ribosomal subunit protein mS27 (339 aa).

The transit peptide at Met1–Phe37 directs the protein to the mitochondrion.

Belongs to the mitochondrion-specific ribosomal protein mS27 family. In terms of assembly, component of the mitochondrial small ribosomal subunit (mt-SSU). Mature yeast 74S mitochondrial ribosomes consist of a small (37S) and a large (54S) subunit. The 37S small subunit contains a 15S ribosomal RNA (15S mt-rRNA) and 34 different proteins. The 54S large subunit contains a 21S rRNA (21S mt-rRNA) and 46 different proteins.

It is found in the mitochondrion. In terms of biological role, component of the mitochondrial ribosome (mitoribosome), a dedicated translation machinery responsible for the synthesis of mitochondrial genome-encoded proteins, including at least some of the essential transmembrane subunits of the mitochondrial respiratory chain. The mitoribosomes are attached to the mitochondrial inner membrane and translation products are cotranslationally integrated into the membrane. The polypeptide is Small ribosomal subunit protein mS27 (MRP13) (Saccharomyces cerevisiae (strain ATCC 204508 / S288c) (Baker's yeast)).